Here is a 336-residue protein sequence, read N- to C-terminus: Nucleoid-associated protein ECA2747 (336 aa).

A disordered region spans residues 317–336 (KGTPPNLRDQLQRRTSGGKQ).

The protein belongs to the YejK family.

It is found in the cytoplasm. It localises to the nucleoid. In Pectobacterium atrosepticum (strain SCRI 1043 / ATCC BAA-672) (Erwinia carotovora subsp. atroseptica), this protein is Nucleoid-associated protein ECA2747.